Consider the following 645-residue polypeptide: 1,4-alpha-glucan branching enzyme GlgB (645 aa).

Catalysis depends on aspartate 309, which acts as the Nucleophile. The active-site Proton donor is glutamate 352. The segment at 619-645 (VKTRKGSKKQDGSKTKVRSNVTSRGKR) is disordered. Residues 636 to 645 (RSNVTSRGKR) show a composition bias toward polar residues.

It belongs to the glycosyl hydrolase 13 family. GlgB subfamily. Monomer.

It catalyses the reaction Transfers a segment of a (1-&gt;4)-alpha-D-glucan chain to a primary hydroxy group in a similar glucan chain.. It participates in glycan biosynthesis; glycogen biosynthesis. Its function is as follows. Catalyzes the formation of the alpha-1,6-glucosidic linkages in glycogen by scission of a 1,4-alpha-linked oligosaccharide from growing alpha-1,4-glucan chains and the subsequent attachment of the oligosaccharide to the alpha-1,6 position. The protein is 1,4-alpha-glucan branching enzyme GlgB of Bacillus cereus (strain AH820).